Reading from the N-terminus, the 316-residue chain is MSPSMPVATTVAADPIAVGAVAVKRPALVIGSLSTAEDGTYQALISDLQSSRQVDRQLLDRLVDNATTLEPSSYDSVHITLAPSDYQGLTQKLPQLLSQLLTGLTPLGTLHLINLTSAVRTLPSELTLAGFNVLSALPDEGTIIAQKPQHVASTSVPLKSRQPGALLNRKKTDPAKKQALWALSSPSTPKIDPEALLTAEDKTRLTPACEPVRSSAPRRKKACKSCSCGLAELEEEERKLGKVVLLDGSQDGTAKEVSQDEKERLIIAAKAAPKATSSCGSCFLGDAFRCAGCPYLGLPAFKPGEKVEIDFGMDDF.

The segment at 4–156 is N-terminal SAM-like domain; it reads SMPVATTVAA…KPQHVASTSV (153 aa). Positions 157-202 are linker; it reads PLKSRQPGALLNRKKTDPAKKQALWALSSPSTPKIDPEALLTAEDK. 4 residues coordinate [2Fe-2S] cluster: C209, C223, C226, and C228. Residues 209–228 form a fe-S binding site A region; sequence CEPVRSSAPRRKKACKSCSC. [4Fe-4S] cluster-binding residues include C279, C282, C290, and C293. 2 short sequence motifs (cx2C motif) span residues 279-282 and 290-293; these read CGSC and CAGC. A fe-S binding site B region spans residues 279 to 293; sequence CGSCFLGDAFRCAGC.

Belongs to the anamorsin family. Monomer. Interacts with TAH18. Interacts with MIA40. It depends on [2Fe-2S] cluster as a cofactor. [4Fe-4S] cluster serves as cofactor.

The protein resides in the cytoplasm. The protein localises to the mitochondrion intermembrane space. In terms of biological role, component of the cytosolic iron-sulfur (Fe-S) protein assembly (CIA) machinery required for the maturation of extramitochondrial Fe-S proteins. Part of an electron transfer chain functioning in an early step of cytosolic Fe-S biogenesis, facilitating the de novo assembly of a [4Fe-4S] cluster on the scaffold complex CFD1-NBP35. Electrons are transferred to DRE2 from NADPH via the FAD- and FMN-containing protein TAH18. TAH18-DRE2 are also required for the assembly of the diferric tyrosyl radical cofactor of ribonucleotide reductase (RNR), probably by providing electrons for reduction during radical cofactor maturation in the catalytic small subunit RNR2. This chain is Fe-S cluster assembly protein DRE2, found in Laccaria bicolor (strain S238N-H82 / ATCC MYA-4686) (Bicoloured deceiver).